The chain runs to 757 residues: 5-methyltetrahydropteroyltriglutamate--homocysteine methyltransferase (757 aa).

5-methyltetrahydropteroyltri-L-glutamate-binding positions include 15 to 18 (RELK) and Lys114. L-homocysteine-binding positions include 428–430 (IGS) and Glu481. Residues 428–430 (IGS) and Glu481 contribute to the L-methionine site. 5-methyltetrahydropteroyltri-L-glutamate is bound by residues 512 to 513 (RC) and Trp558. Asp596 is an L-homocysteine binding site. An L-methionine-binding site is contributed by Asp596. Glu602 provides a ligand contact to 5-methyltetrahydropteroyltri-L-glutamate. The Zn(2+) site is built by His639, Cys641, and Glu663. His692 serves as the catalytic Proton donor. Position 724 (Cys724) interacts with Zn(2+).

This sequence belongs to the vitamin-B12 independent methionine synthase family. Requires Zn(2+) as cofactor.

The catalysed reaction is 5-methyltetrahydropteroyltri-L-glutamate + L-homocysteine = tetrahydropteroyltri-L-glutamate + L-methionine. The protein operates within amino-acid biosynthesis; L-methionine biosynthesis via de novo pathway; L-methionine from L-homocysteine (MetE route): step 1/1. Functionally, catalyzes the transfer of a methyl group from 5-methyltetrahydrofolate to homocysteine resulting in methionine formation. The polypeptide is 5-methyltetrahydropteroyltriglutamate--homocysteine methyltransferase (Lactococcus lactis subsp. cremoris (strain MG1363)).